Consider the following 530-residue polypeptide: Apolipoprotein N-acyltransferase (530 aa).

The next 6 membrane-spanning stretches (helical) occupy residues 19–39 (LIAGLAAALAHPPFGVLPGLL), 65–85 (WLAGVGYFGLGTWWVGEAFLV), 96–116 (FAVTGMAAGLALFWGLAALLY), 128–148 (LTFAGAFAALEWMRGHVLTGF), 169–189 (LVGAYGLTWITLAIAGAPAVW), and 197–217 (AATGLAVASLIGLYGYGAIAL). The CN hydrolase domain maps to 232 to 485 (VQADIKQDLK…SGVIDAQIPG (254 aa)). E274 (proton acceptor) is an active-site residue. Residue K343 is part of the active site. The active-site Nucleophile is C396.

This sequence belongs to the CN hydrolase family. Apolipoprotein N-acyltransferase subfamily.

It is found in the cell inner membrane. It catalyses the reaction N-terminal S-1,2-diacyl-sn-glyceryl-L-cysteinyl-[lipoprotein] + a glycerophospholipid = N-acyl-S-1,2-diacyl-sn-glyceryl-L-cysteinyl-[lipoprotein] + a 2-acyl-sn-glycero-3-phospholipid + H(+). The protein operates within protein modification; lipoprotein biosynthesis (N-acyl transfer). Functionally, catalyzes the phospholipid dependent N-acylation of the N-terminal cysteine of apolipoprotein, the last step in lipoprotein maturation. The sequence is that of Apolipoprotein N-acyltransferase from Caulobacter vibrioides (strain ATCC 19089 / CIP 103742 / CB 15) (Caulobacter crescentus).